Consider the following 716-residue polypeptide: MSKKRIYEYAKELNVKSKEIIDELKNMNVEVSNHMQALEDDQIKTLDKKFRQQESNNNTKQNTQNNHQKQQNNNNNKNNNKQSNKGNANQKGNNNNKNNAKNNKNNKNNKNNKNNKNNKGNKNNKPAAEPKEMPSKITYEEGITVGELADKLNIESSGIIKKLFLLGIVANINQALDEETLELIADDYGVELEKEVVVNEEDLSIYFDEEEADPDAIERPAVVTIMGHVDHGKTTLLDSIRHTKVTAGEAGGITQHIGAYQIENAGKKITFLDTPGHAAFTTMRARGAQVTDITILVVAADDGVMPQTIEAINHAKEANVPTIVAVNKIDKPTANPDRVMQELTEYGLIPEDWGGETIFVPLSALSGEGIDDLLEMIGLVAEVQELKANPDKQAVGTVIEAELDKSRGPAASLLVQNGTLNVGDSIVVGNTYGRIRAMVNDLGQRIKSAGPSTPVEITGINDVPLAGDRFVIFKDEKQARRIGEARHEASVIQQRQESKNVSLDNLFEQMKQGEMKDLNVIIKGDVQGSVEALAASLMKIDVEGVNVRIIHTAVGAINESDVTLANASNGIIIGFNVRPDAGAKRAAEAENVDMRLHRVIYNVIEEIESAMKGLLDPEFEEQVIGQAEVRQTFKVSKVGTIAGSYVTEGKITRNAGVRIIRDGIVLFEGELDTLKRFKDDAKEVAQGYECGITIEKFNDIKEGDIIEAFEMVEIER.

A disordered region spans residues 52–135; that stretch reads QQESNNNTKQ…PAAEPKEMPS (84 aa). Residues 56–125 show a composition bias toward low complexity; sequence NNNTKQNTQN…KNNKGNKNNK (70 aa). Residues 218–387 enclose the tr-type G domain; the sequence is ERPAVVTIMG…GLVAEVQELK (170 aa). A G1 region spans residues 227–234; sequence GHVDHGKT. Residue 227-234 participates in GTP binding; that stretch reads GHVDHGKT. Positions 252-256 are G2; that stretch reads GITQH. The segment at 273 to 276 is G3; it reads DTPG. Residues 273-277 and 327-330 contribute to the GTP site; these read DTPGH and NKID. The tract at residues 327–330 is G4; that stretch reads NKID. The segment at 363 to 365 is G5; sequence SAL.

Belongs to the TRAFAC class translation factor GTPase superfamily. Classic translation factor GTPase family. IF-2 subfamily.

It is found in the cytoplasm. Functionally, one of the essential components for the initiation of protein synthesis. Protects formylmethionyl-tRNA from spontaneous hydrolysis and promotes its binding to the 30S ribosomal subunits. Also involved in the hydrolysis of GTP during the formation of the 70S ribosomal complex. This Staphylococcus haemolyticus (strain JCSC1435) protein is Translation initiation factor IF-2.